The chain runs to 128 residues: Nanos homolog 1 (128 aa).

Positions 7–23 (FDSWSDYLGLSSLISRG) are essential for its translational repressor activity. Residues 25-52 (QPQREGERPRWDVLSPASAEPLPSNESV) form a disordered region. Residues 56–110 (GCGFCRSNREALSLYTSHRLRALDGRVLCPVLRGYTCPLCGANGDWAHTMRYCPL) form a Nanos-type zinc finger. Zn(2+)-binding residues include Cys57, Cys60, His73, Cys84, Cys92, Cys95, His103, and Cys108. 2 consecutive short sequence motifs (C2HC) follow at residues 57 to 84 (CGFCRSNREALSLYTSHRLRALDGRVLC) and 92 to 108 (CPLCGANGDWAHTMRYC).

This sequence belongs to the nanos family. As to quaternary structure, interacts with ccnb1. In terms of tissue distribution, ovary and testis.

It is found in the cytoplasm. The protein resides in the perinuclear region. Its function is as follows. Acts as a translational repressor. Can mediate repression affecting different steps in the translation process: cap-driven, IRES-driven, polyadenylated RNAs or nonpolyadenylated RNAs. Essential for the development of primordial germ cells (PGCs) by ensuring their proper migration and survival. This chain is Nanos homolog 1 (nanos1), found in Xenopus laevis (African clawed frog).